Reading from the N-terminus, the 98-residue chain is Flagellar hook-basal body complex protein FliE (98 aa).

Belongs to the FliE family.

Its subcellular location is the bacterial flagellum basal body. The polypeptide is Flagellar hook-basal body complex protein FliE (Listeria monocytogenes serovar 1/2a (strain ATCC BAA-679 / EGD-e)).